A 492-amino-acid chain; its full sequence is Catalase isozyme C (492 aa).

Heme is bound at residue arginine 62. The active site involves histidine 65. Arginine 102 is a heme binding site. Residue asparagine 138 is part of the active site. Phenylalanine 151 is a binding site for heme. Phosphotyrosine; by STRK1 is present on tyrosine 210. Positions cysteine 325 to tyrosine 348 form a cross-link, 3-(S-cysteinyl)-tyrosine (Cys-Tyr). The heme site is built by arginine 344, tyrosine 348, and arginine 355. A Peroxisome targeting signal motif is present at residues serine 484–methionine 492.

This sequence belongs to the catalase family. As to quaternary structure, homotetramer. Interacts with GLO1 and GLO4; these interactions are disturbed by alpha-hydroxy-2-pyridinemethanesulfonic acid (HPMS) and salicylic acid (SA). Interacts with STRK1 at the plasma membrane. The cofactor is heme. In terms of processing, activated by STRK1-mediated phosphorylation at Tyr-210 upon salt and oxidative stress. In terms of tissue distribution, highly expressed in mature leaves. Mainly expressed in leaf blades, stems, panicles, leaf sheaths, and culms, but barely in roots.

The protein localises to the peroxisome. It is found in the glyoxysome. Its subcellular location is the cell membrane. It carries out the reaction 2 H2O2 = O2 + 2 H2O. Strongly inhibited by beta-mercaptoethanol, sodium azide and potassium cyanide. Slightly repressed by 3-amino-1,2,4-triazole (3-AT). Activity is repressed proportionally to increased concentration of NaCl, KCl, LiCl and MgCl(2). Its function is as follows. Occurs in almost all aerobically respiring organisms and serves to protect cells from the toxic effects of hydrogen peroxide. Responsible for the redox homeostasis in leaves. Prevents nitric oxide (NO) accumulation and subsequent NO-mediated leaf cell death as well as the S-nitrosylation of specific proteins (e.g. glyceraldehyde 3-phosphate dehydrogenase and thioredoxin) by degrading H(2)O(2). Involved in photorespiration. Promotes drought stress tolerance and recovery. Involved in NO-mediated enhanced tolerance to zinc oxide nanoparticles (ZnO NPs)-induced phytotoxicity. Participates in melatonin-mediated detoxification. The polypeptide is Catalase isozyme C (Oryza sativa subsp. japonica (Rice)).